The chain runs to 400 residues: Keratin, type I cytoskeletal 19 (400 aa).

The head stretch occupies residues 1–79 (MTSYSYRQSS…TASDGLLAGN (79 aa)). The residue at position 7 (arginine 7) is an Omega-N-methylarginine. 2 positions are modified to phosphoserine: serine 14 and serine 22. Position 24 is an asymmetric dimethylarginine; alternate (arginine 24). At arginine 24 the chain carries Omega-N-methylarginine; alternate. Arginine 32 is subject to Omega-N-methylarginine. Phosphoserine occurs at positions 35 and 40. An omega-N-methylarginine mark is found at arginine 43 and arginine 51. Serine 57 and serine 72 each carry phosphoserine. Positions 80–115 (EKLTMQNLNDRLASYLDKVRALEAANGELEVKIRDW) are coil 1A. The IF rod domain occupies 80–391 (EKLTMQNLND…SLLEGQEDHY (312 aa)). Positions 116-133 (YQKQGPGPSRDYSHYYTT) are linker 1. Positions 134-225 (IQDLRDKILG…KNHEEEISTL (92 aa)) are coil 1B. The linker 12 stretch occupies residues 226 to 248 (RGQVGGQVSVEVDSAPGTDLAKI). The interval 244–390 (DLAKILSDMR…RSLLEGQEDH (147 aa)) is necessary for interaction with PNN. The segment at 249-387 (LSDMRSQYEV…ATYRSLLEGQ (139 aa)) is coil 2. Phosphothreonine is present on threonine 323. A rod-like helical tail region spans residues 388 to 400 (EDHYSNLSASKVL). Position 391 is a phosphotyrosine (tyrosine 391). Phosphoserine is present on serine 395.

It belongs to the intermediate filament family. As to quaternary structure, heterotetramer of two type I and two type II keratins. Interacts with PNN and the actin-binding domain of DMD.

Functionally, involved in the organization of myofibers. Together with KRT8, helps to link the contractile apparatus to dystrophin at the costameres of striated muscle. This is Keratin, type I cytoskeletal 19 from Pongo abelii (Sumatran orangutan).